Consider the following 201-residue polypeptide: Type III effector protein HopBF1 (201 aa).

Residues Ser-39, Gln-40, Lys-41, Asp-106, Ile-108, and Asp-113 each contribute to the ATP site. The active site involves Asp-154. ATP is bound at residue Gln-156.

The protein belongs to the HopBF1 family.

It localises to the secreted. The protein resides in the host cell. It catalyses the reaction L-seryl-[protein] + ATP = O-phospho-L-seryl-[protein] + ADP + H(+). Functionally, effector protein that targets and inactivates the plant molecular chaperone HSP90 during infection. HopBF1 is recognized by HSP90 as a host client. As a result, HopBF1 phosphorylates HSP90, leading to the inactivation of the HSP90 ATPase activity and chaperone function. Phosphorylation of HSP90 prevents activation of immune receptors that trigger the hypersensitive response in plants. HopBF1 is sufficient to cause severe disease symptoms in plants infected with P.syringae. In vitro, can phosphorylate the recombinant yeast HSP82 (HSP90) on Ser-99, Triticum aestivum (wheat) HSP90 and human HSP 90-beta, but not the prokaryotic HSP90 orthologs, HtpG from E.coli and P.syringae. Does not act on generic protein kinase substrates such as casein and myelin basic protein, as well as the yeast HSP70s and Bip chaperones. The chain is Type III effector protein HopBF1 from Pseudomonas syringae pv. syringae (strain FF5).